The following is a 303-amino-acid chain: uncharacterized protein (303 aa).

4 helical membrane-spanning segments follow: residues 102-122 (TYLLSIIMMVLLCMLPSVMAI), 132-152 (FVLFDDIFILITFILIPFLFF), 184-204 (LLYFFFLLLWVPQGFLQSLIY), and 221-241 (FILLGIDLIFILFAIWNFLLF).

It is found in the membrane. This is an uncharacterized protein from Dictyostelium discoideum (Social amoeba).